Here is a 443-residue protein sequence, read N- to C-terminus: Thymidine phosphorylase (443 aa).

It belongs to the thymidine/pyrimidine-nucleoside phosphorylase family. In terms of assembly, homodimer.

The enzyme catalyses thymidine + phosphate = 2-deoxy-alpha-D-ribose 1-phosphate + thymine. The protein operates within pyrimidine metabolism; dTMP biosynthesis via salvage pathway; dTMP from thymine: step 1/2. Functionally, the enzymes which catalyze the reversible phosphorolysis of pyrimidine nucleosides are involved in the degradation of these compounds and in their utilization as carbon and energy sources, or in the rescue of pyrimidine bases for nucleotide synthesis. The sequence is that of Thymidine phosphorylase from Aeromonas hydrophila subsp. hydrophila (strain ATCC 7966 / DSM 30187 / BCRC 13018 / CCUG 14551 / JCM 1027 / KCTC 2358 / NCIMB 9240 / NCTC 8049).